Reading from the N-terminus, the 588-residue chain is A-type ATP synthase subunit A (588 aa).

237–244 (GPFGSGKT) is a binding site for ATP.

The protein belongs to the ATPase alpha/beta chains family. In terms of assembly, has multiple subunits with at least A(3), B(3), C, D, E, F, H, I and proteolipid K(x).

Its subcellular location is the cell membrane. The catalysed reaction is ATP + H2O + 4 H(+)(in) = ADP + phosphate + 5 H(+)(out). Its function is as follows. Component of the A-type ATP synthase that produces ATP from ADP in the presence of a proton gradient across the membrane. The A chain is the catalytic subunit. In Methanoregula boonei (strain DSM 21154 / JCM 14090 / 6A8), this protein is A-type ATP synthase subunit A.